The following is an 824-amino-acid chain: Ras guanine nucleotide exchange factor I (824 aa).

Disordered regions lie at residues 1–51 and 65–167; these read MSNP…KPTK and GSNL…LILD. Residues 8–41 show a composition bias toward low complexity; sequence SNSTNGSSNSLNGESVSPNRLGSSPGSPISKASS. The span at 83–95 shows a compositional bias: polar residues; it reads NSSVGLLNNSTGS. The span at 104–116 shows a compositional bias: low complexity; the sequence is SSPKSSYILSSSI. Residues 117 to 128 show a composition bias toward gly residues; sequence GSGGSGGGGGSS. The segment covering 136-167 has biased composition (low complexity); sequence SASNNSSGPRSRSGSLGKNNSSQQNNNNLILD. The LisH domain maps to 223–255; it reads GRDNILQLILQHLQFEGLMDSRKILEEEAKIQY. Disordered stretches follow at residues 330 to 354 and 398 to 425; these read YVDE…TTAT and NTQQ…STGT. A compositionally biased stretch (basic and acidic residues) spans 331–341; it reads VDEKDNDKPSK. Positions 343–354 are enriched in low complexity; the sequence is SPTTATTTTTAT. Over residues 413–425 the composition is skewed to polar residues; sequence LKSTQSITGSTGT. The 126-residue stretch at 426–551 folds into the N-terminal Ras-GEF domain; it reads LGPQVKAASL…VISDALNSGL (126 aa). In terms of domain architecture, Ras-GEF spans 585–816; that stretch reads DEEEISRQLT…YTRSMSFEPR (232 aa).

Its function is as follows. Promotes the exchange of Ras-bound GDP by GTP. The protein is Ras guanine nucleotide exchange factor I (gefI) of Dictyostelium discoideum (Social amoeba).